The following is a 122-amino-acid chain: Large ribosomal subunit protein uL14c (122 aa).

Belongs to the universal ribosomal protein uL14 family. As to quaternary structure, part of the 50S ribosomal subunit.

The protein resides in the plastid. Its subcellular location is the chloroplast. Functionally, binds to 23S rRNA. The polypeptide is Large ribosomal subunit protein uL14c (Chlamydomonas reinhardtii (Chlamydomonas smithii)).